A 1026-amino-acid chain; its full sequence is Glutactin (1026 aa).

An N-terminal signal peptide occupies residues 1–17; the sequence is MKPLLLVLALCGAQVHA. Y26 and Y29 each carry sulfotyrosine. N-linked (GlcNAc...) asparagine glycosylation is present at N115. A disulfide bond links C123 and C145. Sulfotyrosine is present on Y182. A disulfide bridge links C298 with C316. N-linked (GlcNAc...) asparagine glycosylation is found at N368 and N402. The residue at position 559 (Y559) is a Sulfotyrosine. A disordered region spans residues 601 to 641; that stretch reads PITTTTTTTTTTTTTSRPYAYNPYANWQNRPSQQHPNWHPA. The span at 603 to 615 shows a compositional bias: low complexity; the sequence is TTTTTTTTTTTTT. The span at 625–636 shows a compositional bias: polar residues; it reads ANWQNRPSQQHP. Y645 carries the sulfotyrosine modification. Disordered regions lie at residues 659–695 and 723–1026; these read EREQ…REQE and EREQ…NSRN. The segment covering 723 to 752 has biased composition (basic and acidic residues); sequence EREQYEREQQEREQREREELERQQREREQQ. Y727 bears the Sulfotyrosine mark. N810 carries N-linked (GlcNAc...) asparagine glycosylation. A compositionally biased stretch (basic and acidic residues) spans 811 to 854; the sequence is FSEEDREQQQQEQLRREQQEQQEREYQLQLEREQQEREQQERGQ. Residues Y836, Y862, Y865, Y868, Y922, and Y928 each carry the sulfotyrosine modification. Low complexity predominate over residues 855–866; sequence QEPGPEEYPSYE. Residues 867–893 are compositionally biased toward basic and acidic residues; sequence EYSRALQEKNAERDRIYAEEQERERQQ. A compositionally biased stretch (basic and acidic residues) spans 923 to 944; it reads DGDRSYAEEQEREQQRRDQVEQ. The span at 945–969 shows a compositional bias: acidic residues; it reads EREEQPDEDQGEEYERSPDEEEAAE. 3 positions are modified to sulfotyrosine: Y981, Y984, and Y1006. The span at 1002–1026 shows a compositional bias: basic and acidic residues; it reads EEERYRAQQEEEDRIQAERERNSRN.

In the N-terminal section; belongs to the type-B carboxylesterase/lipase family. Extensively O-glycosylated and also N-glycosylated. In terms of processing, about four tyrosines are sulfated.

The protein resides in the secreted. It localises to the extracellular space. The protein localises to the extracellular matrix. It is found in the basement membrane. In terms of biological role, not known. Binds calcium ions. This Drosophila melanogaster (Fruit fly) protein is Glutactin (Glt).